The primary structure comprises 225 residues: MADS-box transcription factor 5 (225 aa).

The MADS-box domain occupies 1-61 (MGRGKVELKR…GRLFEFSTSS (61 aa)). The K-box domain maps to 89-179 (ELSNYQEYLK…KRKIQETSGE (91 aa)).

In terms of assembly, may interact with the K-box of MADS6.

Its subcellular location is the nucleus. Its function is as follows. Probable transcription factor. This chain is MADS-box transcription factor 5 (MADS5), found in Oryza sativa subsp. indica (Rice).